We begin with the raw amino-acid sequence, 1252 residues long: Elongator complex protein 1 (1252 aa).

The interval V814 to Q1252 is mediates dimerization. Phosphoserine is present on S1094. The interval S1097–N1116 is disordered. Over residues R1106–N1116 the composition is skewed to basic residues. The segment at F1111–P1129 is required for binding to tRNA.

Belongs to the ELP1/IKA1 family. Homodimer. Component of the elongator complex composed of Elp1, Elp2, Elp3, Elp4, Elp5 and Elp6. The elongator complex associates with and stabilizes microtubules; efficient interaction requires the full complex.

Its subcellular location is the cytoplasm. The protein localises to the nucleus. It is found in the cytoskeleton. The protein resides in the spindle. It participates in tRNA modification; 5-methoxycarbonylmethyl-2-thiouridine-tRNA biosynthesis. Its function is as follows. Component of the elongator complex, which is required for multiple tRNA modifications, including mcm5U (5-methoxycarbonylmethyl uridine), mcm5s2U (5-methoxycarbonylmethyl-2-thiouridine), and ncm5U (5-carbamoylmethyl uridine). The elongator complex catalyzes formation of carboxymethyluridine in the wobble base at position 34 in tRNAs. ELP1 binds to tRNA, mediating interaction of the elongator complex with tRNA. Binding by the elongator complex stabilizes microtubules and promotes their growth. This induces central spindle asymmetry, promoting polarized signaling endosome trafficking during asymmetric cell division and cell fate assignation of sensory organ precursor cells. Involved in protein synthesis-dependent long-term memory formation, probably as part of the elongator complex. In Drosophila melanogaster (Fruit fly), this protein is Elongator complex protein 1.